We begin with the raw amino-acid sequence, 262 residues long: WW domain-binding protein 2 (262 aa).

Residues 1–84 (MALNKNHSEG…YLMKDCEVKQ (84 aa)) form the GRAM domain. A Phosphotyrosine modification is found at tyrosine 192. Residues 196-200 (PPPPY) carry the PPxY motif 1 motif. A compositionally biased stretch (pro residues) spans 197–206 (PPPYPGPMEP). The disordered stretch occupies residues 197–262 (PPPYPGPMEP…YYPPEDKKTQ (66 aa)). Low complexity predominate over residues 219–231 (AAEAKAAEAAASA). The residue at position 232 (tyrosine 232) is a Phosphotyrosine. Over residues 246–255 (SQPPPPPYYP) the composition is skewed to pro residues. Residues 249-253 (PPPPY) carry the PPxY motif 2 motif.

In terms of assembly, binds to the WW domain of YAP1, WWP1 and WWP2. Interacts with NEDD4. Interacts with ESR1 and UBE3A. Post-translationally, phosphorylated in repsonse to EGF as well as estrogen and progesterone hormones. Tyr-192 and Tyr-232 are phosphorylated by YES and SRC inducing nuclear translocation.

It localises to the cytoplasm. The protein localises to the nucleus. Functionally, acts as a transcriptional coactivator of estrogen and progesterone receptors (ESR1 and PGR) upon hormone activation. In presence of estrogen, binds to ESR1-responsive promoters. Synergizes with YAP1 to enhance PGR activity. Modulates expression of post-synaptic scaffolding proteins via regulation of ESR1, ESR2 and PGR. The polypeptide is WW domain-binding protein 2 (Wbp2) (Rattus norvegicus (Rat)).